A 278-amino-acid chain; its full sequence is HTH-type transcriptional activator RhaS (278 aa).

Positions 174 to 272 (NLLLAWLEDH…NWSPRDIRQG (99 aa)) constitute an HTH araC/xylS-type domain. 2 DNA-binding regions (H-T-H motif) span residues 191–212 (DAVA…KQKT) and 239–262 (VTDI…RREF).

Binds DNA as a dimer.

It is found in the cytoplasm. Functionally, activates expression of the rhaBAD and rhaT operons. This Escherichia coli O45:K1 (strain S88 / ExPEC) protein is HTH-type transcriptional activator RhaS.